The chain runs to 209 residues: MICOS complex subunit mic19 (209 aa).

Coiled coils occupy residues 48–86 and 127–156; these read LELEIQNRVAKELERLRAREQQTLAEIEKRLSEAKDTGS and EVAAVNKELNRESVNSEIEELRVKLEGRKK.

It belongs to the MICOS complex subunit Mic19 family. Component of the mitochondrial contact site and cristae organizing system (MICOS) complex.

The protein resides in the mitochondrion inner membrane. Component of the MICOS complex, a large protein complex of the mitochondrial inner membrane that plays crucial roles in the maintenance of crista junctions, inner membrane architecture, and formation of contact sites to the outer membrane. Involved in osmoadaptation. This chain is MICOS complex subunit mic19, found in Emericella nidulans (strain FGSC A4 / ATCC 38163 / CBS 112.46 / NRRL 194 / M139) (Aspergillus nidulans).